The primary structure comprises 392 residues: Tyrosine--tRNA ligase (392 aa).

A 'HIGH' region motif is present at residues 39–48 (PTAPDIHIGH). A 'KMSKS' region motif is present at residues 223-227 (KMSKS). Position 226 (K226) interacts with ATP. The S4 RNA-binding domain occupies 331 to 391 (IGIAQLLKQA…GKRRFARVVL (61 aa)).

This sequence belongs to the class-I aminoacyl-tRNA synthetase family. TyrS type 2 subfamily. As to quaternary structure, homodimer.

It is found in the cytoplasm. It carries out the reaction tRNA(Tyr) + L-tyrosine + ATP = L-tyrosyl-tRNA(Tyr) + AMP + diphosphate + H(+). Its function is as follows. Catalyzes the attachment of tyrosine to tRNA(Tyr) in a two-step reaction: tyrosine is first activated by ATP to form Tyr-AMP and then transferred to the acceptor end of tRNA(Tyr). The chain is Tyrosine--tRNA ligase from Ralstonia nicotianae (strain ATCC BAA-1114 / GMI1000) (Ralstonia solanacearum).